The chain runs to 868 residues: Alanine--tRNA ligase (868 aa).

Residues His553, His557, Cys657, and His661 each contribute to the Zn(2+) site. The tract at residues 831–851 is disordered; the sequence is GGKGGGRADMAQAGGSRPQAL.

The protein belongs to the class-II aminoacyl-tRNA synthetase family. The cofactor is Zn(2+).

Its subcellular location is the cytoplasm. It carries out the reaction tRNA(Ala) + L-alanine + ATP = L-alanyl-tRNA(Ala) + AMP + diphosphate. Functionally, catalyzes the attachment of alanine to tRNA(Ala) in a two-step reaction: alanine is first activated by ATP to form Ala-AMP and then transferred to the acceptor end of tRNA(Ala). Also edits incorrectly charged Ser-tRNA(Ala) and Gly-tRNA(Ala) via its editing domain. The protein is Alanine--tRNA ligase of Chromohalobacter salexigens (strain ATCC BAA-138 / DSM 3043 / CIP 106854 / NCIMB 13768 / 1H11).